The primary structure comprises 99 residues: Putative membrane protein insertion efficiency factor (99 aa).

It belongs to the UPF0161 family.

Its subcellular location is the cell membrane. In terms of biological role, could be involved in insertion of integral membrane proteins into the membrane. This chain is Putative membrane protein insertion efficiency factor, found in Levilactobacillus brevis (strain ATCC 367 / BCRC 12310 / CIP 105137 / JCM 1170 / LMG 11437 / NCIMB 947 / NCTC 947) (Lactobacillus brevis).